We begin with the raw amino-acid sequence, 253 residues long: Imidazole glycerol phosphate synthase subunit HisF (253 aa).

Residues Asp-11 and Asp-130 contribute to the active site.

This sequence belongs to the HisA/HisF family. Heterodimer of HisH and HisF.

The protein localises to the cytoplasm. The catalysed reaction is 5-[(5-phospho-1-deoxy-D-ribulos-1-ylimino)methylamino]-1-(5-phospho-beta-D-ribosyl)imidazole-4-carboxamide + L-glutamine = D-erythro-1-(imidazol-4-yl)glycerol 3-phosphate + 5-amino-1-(5-phospho-beta-D-ribosyl)imidazole-4-carboxamide + L-glutamate + H(+). Its pathway is amino-acid biosynthesis; L-histidine biosynthesis; L-histidine from 5-phospho-alpha-D-ribose 1-diphosphate: step 5/9. Its function is as follows. IGPS catalyzes the conversion of PRFAR and glutamine to IGP, AICAR and glutamate. The HisF subunit catalyzes the cyclization activity that produces IGP and AICAR from PRFAR using the ammonia provided by the HisH subunit. In Acidobacterium capsulatum (strain ATCC 51196 / DSM 11244 / BCRC 80197 / JCM 7670 / NBRC 15755 / NCIMB 13165 / 161), this protein is Imidazole glycerol phosphate synthase subunit HisF.